The sequence spans 566 residues: Urease subunit alpha (566 aa).

Residues 128 to 566 (GGVDTHIHFI…LPMAQRYFLF (439 aa)) enclose the Urease domain. 3 residues coordinate Ni(2+): H133, H135, and K216. Residue K216 is modified to N6-carboxylysine. H218 contributes to the substrate binding site. Residues H245 and H271 each coordinate Ni(2+). The active-site Proton donor is the H319. D359 is a Ni(2+) binding site.

Belongs to the metallo-dependent hydrolases superfamily. Urease alpha subunit family. May form a heterohexamer of 3 UreC (alpha) and 3 UreAB (gamma/beta) subunits. May also form a heterotrimer of UreA (gamma), UreB (beta) and UreC (alpha) subunits. Three heterotrimers associate to form the active enzyme. It depends on Ni cation as a cofactor. Post-translationally, carboxylation allows a single lysine to coordinate two nickel ions.

The protein resides in the cytoplasm. It catalyses the reaction urea + 2 H2O + H(+) = hydrogencarbonate + 2 NH4(+). It functions in the pathway nitrogen metabolism; urea degradation; CO(2) and NH(3) from urea (urease route): step 1/1. In Pseudomonas syringae pv. tomato (strain ATCC BAA-871 / DC3000), this protein is Urease subunit alpha.